A 122-amino-acid chain; its full sequence is Protein C10 (122 aa).

Belongs to the UPF0456 family.

Its subcellular location is the cytoplasm. This Danio rerio (Zebrafish) protein is Protein C10.